Reading from the N-terminus, the 130-residue chain is Fluoride-specific ion channel FluC 2 (130 aa).

4 consecutive transmembrane segments (helical) span residues 4 to 24 (GLST…GAIC), 38 to 58 (NLWG…FFLA), 72 to 92 (LYLL…SLIL), and 103 to 123 (WMEL…FISL). Gly-82 and Ser-85 together coordinate Na(+).

Belongs to the fluoride channel Fluc/FEX (TC 1.A.43) family.

The protein localises to the cell inner membrane. It carries out the reaction fluoride(in) = fluoride(out). Na(+) is not transported, but it plays an essential structural role and its presence is essential for fluoride channel function. Functionally, fluoride-specific ion channel. Important for reducing fluoride concentration in the cell, thus reducing its toxicity. The protein is Fluoride-specific ion channel FluC 2 of Prochlorococcus marinus (strain SARG / CCMP1375 / SS120).